A 611-amino-acid polypeptide reads, in one-letter code: Large ribosomal subunit assembly factor BipA (611 aa).

The tr-type G domain maps to 7 to 202; sequence KNLRNIAIIA…AIVKYTPPPT (196 aa). GTP contacts are provided by residues 19–24 and 132–135; these read DHGKTT and NKID.

This sequence belongs to the TRAFAC class translation factor GTPase superfamily. Classic translation factor GTPase family. BipA subfamily. Monomer.

The protein resides in the cytoplasm. The enzyme catalyses GTP + H2O = GDP + phosphate + H(+). A 50S ribosomal subunit assembly protein with GTPase activity, required for 50S subunit assembly at low temperatures, may also play a role in translation. Binds GTP and analogs. Binds the 70S ribosome between the 30S and 50S subunits, in a similar position as ribosome-bound EF-G; it contacts a number of ribosomal proteins, both rRNAs and the A-site tRNA. The chain is Large ribosomal subunit assembly factor BipA from Buchnera aphidicola subsp. Baizongia pistaciae (strain Bp).